Here is a 308-residue protein sequence, read N- to C-terminus: MPIRIPTELPAQSILNSENIFVMDTDRAAMQDIRPLEVGILNLMPNKMETEVQFLRLLSNTPLQINVDLIRIDNQAPKNTPESHMKAFYQNFDDVADKQYDGLIVTGAPLALLDYDDVKYWQKMKVVLEWAQRHVQSTLFSCWAAHAALYHFHGKNRRLRDEKLSGIFAHQVKDEHNELMRGFDPVFHAPHSRYGEISVADYESVEGLSVLASSEKTGAYIVASDDKRLVFVTGHPEYDPDSLDQEYKRDLKAGLTPNMPENYYPDDDPAQGPLVTWRAHGSLLFTNWLNYYVYQNTPYDLASLSNKA.

Cys142 functions as the Acyl-thioester intermediate in the catalytic mechanism. Lys163 and Ser192 together coordinate substrate. The active-site Proton acceptor is the His235. Glu237 is a catalytic residue. Position 249 (Arg249) interacts with substrate.

It belongs to the MetA family.

The protein localises to the cytoplasm. The enzyme catalyses L-homoserine + succinyl-CoA = O-succinyl-L-homoserine + CoA. The protein operates within amino-acid biosynthesis; L-methionine biosynthesis via de novo pathway; O-succinyl-L-homoserine from L-homoserine: step 1/1. Functionally, transfers a succinyl group from succinyl-CoA to L-homoserine, forming succinyl-L-homoserine. This is Homoserine O-succinyltransferase from Pseudoalteromonas atlantica (strain T6c / ATCC BAA-1087).